Consider the following 119-residue polypeptide: Ribonuclease P protein component (119 aa).

It belongs to the RnpA family. In terms of assembly, consists of a catalytic RNA component (M1 or rnpB) and a protein subunit.

The enzyme catalyses Endonucleolytic cleavage of RNA, removing 5'-extranucleotides from tRNA precursor.. In terms of biological role, RNaseP catalyzes the removal of the 5'-leader sequence from pre-tRNA to produce the mature 5'-terminus. It can also cleave other RNA substrates such as 4.5S RNA. The protein component plays an auxiliary but essential role in vivo by binding to the 5'-leader sequence and broadening the substrate specificity of the ribozyme. The protein is Ribonuclease P protein component of Nitrosococcus oceani (strain ATCC 19707 / BCRC 17464 / JCM 30415 / NCIMB 11848 / C-107).